Here is a 316-residue protein sequence, read N- to C-terminus: MSNKLEQLRKLTTVVADTGEIDAIKKYQPEDATTNPSLILKAAQIAEYAPLIDASIEYAKTQSDDKAQQIQDTCDMLAVNIGKEILKTIPGRISTEVDARLSYDMEGSVAKARQLVKMYNDAGITNDRILIKLASTWEGIRAAEILEKEGINCNLTLLFSFAQARACAEAGVFLISPFVGRIMDWYKAKEGRDFEAQEDPGVLSVTKIYNYYKEYGYKTVVMGASFRNIGEILELAGCDRLTIAPALLAELEAAEGEVVEKLVDSKGAAERPAPMTHAEFLWEHNQDPMAVEKLAEGIRNFAVDQGKLEAMIAAKL.

Lys132 serves as the catalytic Schiff-base intermediate with substrate.

The protein belongs to the transaldolase family. Type 1 subfamily. Homodimer.

It is found in the cytoplasm. It catalyses the reaction D-sedoheptulose 7-phosphate + D-glyceraldehyde 3-phosphate = D-erythrose 4-phosphate + beta-D-fructose 6-phosphate. It participates in carbohydrate degradation; pentose phosphate pathway; D-glyceraldehyde 3-phosphate and beta-D-fructose 6-phosphate from D-ribose 5-phosphate and D-xylulose 5-phosphate (non-oxidative stage): step 2/3. Its function is as follows. Transaldolase is important for the balance of metabolites in the pentose-phosphate pathway. This is Transaldolase from Vibrio vulnificus (strain YJ016).